Here is a 1113-residue protein sequence, read N- to C-terminus: Sterol regulatory element binding protein sbp-1 (1113 aa).

Residues 1-52 are transcriptional activation (acidic); it reads MNEEFEGDVPMSDPFLSLVTKLDDIAPFPNNDPLDFDMEHNWQEPGPSQQPD. 4 disordered regions span residues 24–68, 101–132, 206–274, and 290–345; these read DIAP…EYYD, LGGG…TSPP, SPYD…SPQN, and EVER…SQGT. Residues 229–238 show a composition bias toward basic residues; sequence PHHHHHHPMP. Over residues 324–337 the composition is skewed to acidic residues; it reads AEGDEDEDDEDSDS. The tract at residues 355–368 is basic motif; it reads ERRTAHNLIEKKYR. The region spanning 355–405 is the bHLH domain; it reads ERRTAHNLIEKKYRCSINDRIQQLKVLLCGDEAKLSKSATLRRAIEHIEEV. A helix-loop-helix motif region spans residues 369–405; sequence CSINDRIQQLKVLLCGDEAKLSKSATLRRAIEHIEEV. Residues 395 to 422 adopt a coiled-coil conformation; sequence LRRAIEHIEEVEHENQVLKHHVEQMRKT. Residues 437 to 472 form a disordered region; sequence TEYSARSPVESSPSPPRNERKRSRMSTTTPMKNGTR. The next 2 membrane-spanning stretches (helical) occupy residues 478–498 and 541–561; these read VTLF…LLAG and MSYV…KLLI.

In terms of processing, processed in the Golgi apparatus, releasing the protein from the membrane. Ubiquitinated; the nuclear form has a rapid turnover and is rapidly ubiquitinated and degraded by the proteasome in the nucleus. Broadly expressed, including many cells in the head. Expressed in the intestine.

It localises to the nucleus. The protein localises to the endoplasmic reticulum membrane. Transcription factor involved in maintaining normal fat levels. Regulates the expression of genes involved in lipid metabolism in response to nutrient availability, such as the fatty-acid desaturases fat-5, fat-6 and fat-7. In response to a high-glucose diet, promotes fatty acid synthesis, elongation and desaturation, acting in concert with transcription factor mxl-3. Plays a role in synthesis of monomethyl branched-chain fatty acids (mmBCFAs) as well as other very-long-chain fatty acids. Downstream of the cis-Golgi membrane protein eas-1/GOLT1B and the E3 ubiquitin ligase rnf-145/RNF145, plays a role in the regulation of glial size, perhaps by modulating synthesis of long-chain polyunsaturated fatty-acids (LC-PUFA). Modulates expression of genes in the one-carbon cycle, which produces the methyl donor S-adenosylmethionine (SAM). Probably involved in a feedback loop in which decreased levels of SAM lead to increased transcriptional activity of sbp-1, thereby causing lipid accumulation. Involved in the negative regulation of zinc homeostasis. Involved in the response to simulated microgravity, in concert with Mediator complex subunit mdt-15, probably acting in the intestine. Plays a role in transgenerational lipid accumulation in response to a high-fat diet, probably acting by upregulating wdr-5.1 expression to increase the level of trimethylated 'Lys-4' histone H3 (H3K4me3), which may then induce the expression of fat-5, fat-6 and fat-7. May act as an oxygen sensor for lipid metabolism. Functionally, precursor of the transcription factor form, which is embedded in the endoplasmic reticulum membrane. Processing of this form allows release of the transcription factor form that translocates into the nucleus and activates transcription of genes involved in sterol biosynthesis and lipid homeostasis. Its function is as follows. Key transcription factor that regulates expression of genes involved in sterol biosynthesis and lipid homeostasis. The chain is Sterol regulatory element binding protein sbp-1 from Caenorhabditis elegans.